Consider the following 228-residue polypeptide: ATP synthase subunit a (228 aa).

Transmembrane regions (helical) follow at residues 19-39 (AIYI…AVAV), 81-101 (LIAT…IPGF), 107-127 (SLNL…FEGI), 136-156 (FAGF…IEVI), 178-198 (LFLL…PYAL), and 204-224 (ILQA…AVVV).

The protein belongs to the ATPase A chain family. In terms of assembly, F-type ATPases have 2 components, CF(1) - the catalytic core - and CF(0) - the membrane proton channel. CF(1) has five subunits: alpha(3), beta(3), gamma(1), delta(1), epsilon(1). CF(0) has three main subunits: a(1), b(2) and c(9-12). The alpha and beta chains form an alternating ring which encloses part of the gamma chain. CF(1) is attached to CF(0) by a central stalk formed by the gamma and epsilon chains, while a peripheral stalk is formed by the delta and b chains.

It localises to the cell inner membrane. In terms of biological role, key component of the proton channel; it plays a direct role in the translocation of protons across the membrane. The polypeptide is ATP synthase subunit a (Campylobacter hominis (strain ATCC BAA-381 / DSM 21671 / CCUG 45161 / LMG 19568 / NCTC 13146 / CH001A)).